The chain runs to 601 residues: Aspartate--tRNA ligase (601 aa).

L-aspartate is bound at residue Glu-183. Positions 207-210 are aspartate; it reads QIFK. Residue Arg-229 participates in L-aspartate binding. ATP contacts are provided by residues 229 to 231 and Gln-238; that span reads RDE. His-457 provides a ligand contact to L-aspartate. Residue Glu-497 coordinates ATP. Arg-504 serves as a coordination point for L-aspartate. 549-552 is an ATP binding site; sequence GIDR.

It belongs to the class-II aminoacyl-tRNA synthetase family. Type 1 subfamily. Homodimer.

Its subcellular location is the cytoplasm. It catalyses the reaction tRNA(Asp) + L-aspartate + ATP = L-aspartyl-tRNA(Asp) + AMP + diphosphate. Its function is as follows. Catalyzes the attachment of L-aspartate to tRNA(Asp) in a two-step reaction: L-aspartate is first activated by ATP to form Asp-AMP and then transferred to the acceptor end of tRNA(Asp). This Leptospira interrogans serogroup Icterohaemorrhagiae serovar copenhageni (strain Fiocruz L1-130) protein is Aspartate--tRNA ligase.